A 142-amino-acid chain; its full sequence is ATP synthase epsilon chain (142 aa).

This sequence belongs to the ATPase epsilon chain family. F-type ATPases have 2 components, CF(1) - the catalytic core - and CF(0) - the membrane proton channel. CF(1) has five subunits: alpha(3), beta(3), gamma(1), delta(1), epsilon(1). CF(0) has three main subunits: a, b and c.

The protein localises to the cell inner membrane. Produces ATP from ADP in the presence of a proton gradient across the membrane. This chain is ATP synthase epsilon chain, found in Shewanella woodyi (strain ATCC 51908 / MS32).